A 605-amino-acid chain; its full sequence is Alpha-1,3-galactosidase B (605 aa).

The signal sequence occupies residues 1–19; it reads MKRIIFNFCFVWLAVSAFA. PbH1 repeat units lie at residues 428–450, 451–473, and 484–538; these read CPEV…LFST, PLKT…LLCG, and CRNV…VIED.

This sequence belongs to the glycosyl hydrolase 110 family. B subfamily.

The enzyme catalyses Hydrolysis of terminal, non-reducing branched (1-&gt;3)-alpha-D-galactosidic residues, producing free D-galactose.. It carries out the reaction Hydrolysis of terminal, non-reducing linear (1-&gt;3)-alpha-D-galactosidic residues, producing free D-galactose.. It catalyses the reaction Hydrolysis of terminal, non-reducing alpha-D-galactose residues in alpha-D-galactosides, including galactose oligosaccharides, galactomannans and galactolipids.. Functionally, alpha-galactosidase. Removes both branched alpha-1,3-linked galactose residues of blood group B antigens and linear alpha-1,3-linked galactose structures. This chain is Alpha-1,3-galactosidase B (glaB2), found in Phocaeicola vulgatus (strain ATCC 8482 / DSM 1447 / JCM 5826 / CCUG 4940 / NBRC 14291 / NCTC 11154) (Bacteroides vulgatus).